The following is a 317-amino-acid chain: Transaldolase 1 (317 aa).

The active-site Schiff-base intermediate with substrate is the Lys-132.

Belongs to the transaldolase family. Type 1 subfamily. In terms of assembly, homodimer.

Its subcellular location is the cytoplasm. It carries out the reaction D-sedoheptulose 7-phosphate + D-glyceraldehyde 3-phosphate = D-erythrose 4-phosphate + beta-D-fructose 6-phosphate. The protein operates within carbohydrate degradation; pentose phosphate pathway; D-glyceraldehyde 3-phosphate and beta-D-fructose 6-phosphate from D-ribose 5-phosphate and D-xylulose 5-phosphate (non-oxidative stage): step 2/3. Functionally, transaldolase is important for the balance of metabolites in the pentose-phosphate pathway. The protein is Transaldolase 1 of Salmonella paratyphi A (strain ATCC 9150 / SARB42).